We begin with the raw amino-acid sequence, 547 residues long: Chaperonin GroEL (547 aa).

ATP is bound by residues 30 to 33, Lys-51, 87 to 91, Gly-415, and Asp-496; these read TLGP and DGTTT.

This sequence belongs to the chaperonin (HSP60) family. As to quaternary structure, forms a cylinder of 14 subunits composed of two heptameric rings stacked back-to-back. Interacts with the co-chaperonin GroES.

It localises to the cytoplasm. The enzyme catalyses ATP + H2O + a folded polypeptide = ADP + phosphate + an unfolded polypeptide.. Together with its co-chaperonin GroES, plays an essential role in assisting protein folding. The GroEL-GroES system forms a nano-cage that allows encapsulation of the non-native substrate proteins and provides a physical environment optimized to promote and accelerate protein folding. This chain is Chaperonin GroEL, found in Histophilus somni (strain 129Pt) (Haemophilus somnus).